The sequence spans 133 residues: Phosphoribosyl-AMP cyclohydrolase (133 aa).

Aspartate 77 contacts Mg(2+). Cysteine 78 contacts Zn(2+). Residues aspartate 79 and aspartate 81 each coordinate Mg(2+). Cysteine 95 and cysteine 102 together coordinate Zn(2+).

This sequence belongs to the PRA-CH family. Homodimer. Requires Mg(2+) as cofactor. The cofactor is Zn(2+).

The protein resides in the cytoplasm. It carries out the reaction 1-(5-phospho-beta-D-ribosyl)-5'-AMP + H2O = 1-(5-phospho-beta-D-ribosyl)-5-[(5-phospho-beta-D-ribosylamino)methylideneamino]imidazole-4-carboxamide. It participates in amino-acid biosynthesis; L-histidine biosynthesis; L-histidine from 5-phospho-alpha-D-ribose 1-diphosphate: step 3/9. In terms of biological role, catalyzes the hydrolysis of the adenine ring of phosphoribosyl-AMP. The polypeptide is Phosphoribosyl-AMP cyclohydrolase (Thiobacillus denitrificans (strain ATCC 25259 / T1)).